We begin with the raw amino-acid sequence, 240 residues long: UPF0502 protein Veis_2102 (240 aa).

This sequence belongs to the UPF0502 family.

This chain is UPF0502 protein Veis_2102, found in Verminephrobacter eiseniae (strain EF01-2).